We begin with the raw amino-acid sequence, 199 residues long: Protein GrpE (199 aa).

A disordered region spans residues 1 to 40 (MEKKKHGTNSISEALKVKAAVEQETATPEPTPQSETESAD). Residues 24-36 (ETATPEPTPQSET) are compositionally biased toward polar residues.

Belongs to the GrpE family. In terms of assembly, homodimer.

It localises to the cytoplasm. In terms of biological role, participates actively in the response to hyperosmotic and heat shock by preventing the aggregation of stress-denatured proteins, in association with DnaK and GrpE. It is the nucleotide exchange factor for DnaK and may function as a thermosensor. Unfolded proteins bind initially to DnaJ; upon interaction with the DnaJ-bound protein, DnaK hydrolyzes its bound ATP, resulting in the formation of a stable complex. GrpE releases ADP from DnaK; ATP binding to DnaK triggers the release of the substrate protein, thus completing the reaction cycle. Several rounds of ATP-dependent interactions between DnaJ, DnaK and GrpE are required for fully efficient folding. The sequence is that of Protein GrpE from Geotalea uraniireducens (strain Rf4) (Geobacter uraniireducens).